Consider the following 948-residue polypeptide: Glycine dehydrogenase (decarboxylating) (948 aa).

Position 696 is an N6-(pyridoxal phosphate)lysine (K696).

The protein belongs to the GcvP family. The glycine cleavage system is composed of four proteins: P, T, L and H. Pyridoxal 5'-phosphate is required as a cofactor.

The enzyme catalyses N(6)-[(R)-lipoyl]-L-lysyl-[glycine-cleavage complex H protein] + glycine + H(+) = N(6)-[(R)-S(8)-aminomethyldihydrolipoyl]-L-lysyl-[glycine-cleavage complex H protein] + CO2. In terms of biological role, the glycine cleavage system catalyzes the degradation of glycine. The P protein binds the alpha-amino group of glycine through its pyridoxal phosphate cofactor; CO(2) is released and the remaining methylamine moiety is then transferred to the lipoamide cofactor of the H protein. This chain is Glycine dehydrogenase (decarboxylating), found in Akkermansia muciniphila (strain ATCC BAA-835 / DSM 22959 / JCM 33894 / BCRC 81048 / CCUG 64013 / CIP 107961 / Muc).